We begin with the raw amino-acid sequence, 314 residues long: Glutathione synthetase (314 aa).

Positions 125–309 (KLFVMNFPQL…VAAKVWDTIE (185 aa)) constitute an ATP-grasp domain. 151-207 (RDKHGAVVMKPLHGHGGAAVFRVMPQDMNFGSLFDMFTVTFKEPWVIQQFIPEVKHG) is an ATP binding site. Mg(2+)-binding residues include Glu-280 and Asn-282.

Belongs to the prokaryotic GSH synthase family. Requires Mg(2+) as cofactor. It depends on Mn(2+) as a cofactor.

The enzyme catalyses gamma-L-glutamyl-L-cysteine + glycine + ATP = glutathione + ADP + phosphate + H(+). It functions in the pathway sulfur metabolism; glutathione biosynthesis; glutathione from L-cysteine and L-glutamate: step 2/2. This chain is Glutathione synthetase, found in Bradyrhizobium diazoefficiens (strain JCM 10833 / BCRC 13528 / IAM 13628 / NBRC 14792 / USDA 110).